A 342-amino-acid polypeptide reads, in one-letter code: uncharacterized protein (342 aa).

Belongs to the proline racemase family.

This is an uncharacterized protein from Brucella canis (strain ATCC 23365 / NCTC 10854 / RM-666).